The sequence spans 418 residues: Tyrosine--tRNA ligase (418 aa).

L-tyrosine is bound at residue Tyr34. The short motif at 39-48 is the 'HIGH' region element; it reads PTADSLHLGH. Residues Tyr169 and Gln173 each coordinate L-tyrosine. The short motif at 229 to 233 is the 'KMSKS' region element; it reads KFGKS. Lys232 is an ATP binding site. The 67-residue stretch at 352 to 418 folds into the S4 RNA-binding domain; sequence NNIVELLVSS…GKKKYFVLTY (67 aa).

It belongs to the class-I aminoacyl-tRNA synthetase family. TyrS type 1 subfamily. As to quaternary structure, homodimer.

The protein resides in the cytoplasm. It catalyses the reaction tRNA(Tyr) + L-tyrosine + ATP = L-tyrosyl-tRNA(Tyr) + AMP + diphosphate + H(+). In terms of biological role, catalyzes the attachment of tyrosine to tRNA(Tyr) in a two-step reaction: tyrosine is first activated by ATP to form Tyr-AMP and then transferred to the acceptor end of tRNA(Tyr). This Streptococcus pneumoniae (strain CGSP14) protein is Tyrosine--tRNA ligase.